A 583-amino-acid chain; its full sequence is Chitinase 2 (583 aa).

Residues 1-19 form the signal peptide; sequence MLSFKSLLAAAVVASSALA. Residues 23–305 form the GH18 domain; that stretch reads NQVALYWGQN…VQVKNVLNQN (283 aa). Glutamate 153 serves as the catalytic Proton donor. N-linked (GlcNAc...) asparagine glycosylation is found at asparagine 370, asparagine 546, and asparagine 549. Residue glycine 560 is the site of GPI-anchor amidated glycine attachment. A propeptide spans 561–583 (removed in mature form); that stretch reads AAVANSLNSVWFTVPFLLAAFAF.

Belongs to the glycosyl hydrolase 18 family. Chitinase class III subfamily. The GPI-anchor is attached to the protein in the endoplasmic reticulum and serves to target the protein to the cell surface. There, the glucosamine-inositol phospholipid moiety is cleaved off and the GPI-modified mannoprotein is covalently attached via its lipidless GPI glycan remnant to the 1,6-beta-glucan of the outer cell wall layer. Post-translationally, proteolytic cleavage by SAP9 and SAP10 leads to the cell wall release of CHT2 and increased chitinase activity, suggesting a direct influence of SAP9 and SAP10 on CHT2 function.

It localises to the secreted. Its subcellular location is the cell wall. The protein resides in the membrane. It carries out the reaction Random endo-hydrolysis of N-acetyl-beta-D-glucosaminide (1-&gt;4)-beta-linkages in chitin and chitodextrins.. Its function is as follows. Chitinase involved in the remodeling of chitin in the fungal cell wall. Plays a role in cell separation. The chain is Chitinase 2 (CHT2) from Candida albicans (strain SC5314 / ATCC MYA-2876) (Yeast).